Here is a 267-residue protein sequence, read N- to C-terminus: Tryptophan synthase alpha chain (267 aa).

Catalysis depends on proton acceptor residues E49 and D60.

Belongs to the TrpA family. Tetramer of two alpha and two beta chains.

It catalyses the reaction (1S,2R)-1-C-(indol-3-yl)glycerol 3-phosphate + L-serine = D-glyceraldehyde 3-phosphate + L-tryptophan + H2O. It participates in amino-acid biosynthesis; L-tryptophan biosynthesis; L-tryptophan from chorismate: step 5/5. Functionally, the alpha subunit is responsible for the aldol cleavage of indoleglycerol phosphate to indole and glyceraldehyde 3-phosphate. The chain is Tryptophan synthase alpha chain from Methylococcus capsulatus (strain ATCC 33009 / NCIMB 11132 / Bath).